Here is a 249-residue protein sequence, read N- to C-terminus: RING finger protein 223 (249 aa).

Positions 1-44 are disordered; the sequence is MSSGQQVWHTAVPPPRRSSSIASMPRSPSSAGSPRSPGTPGSER. The span at 17–44 shows a compositional bias: low complexity; the sequence is RSSSIASMPRSPSSAGSPRSPGTPGSER. The RING-type zinc finger occupies 51 to 102; that stretch reads CSICFSGYDNIFKTPKELSCTHVFCLECLARLAAAQPVGRPGGEAVPCPFCR. Residues 199 to 219 form a helical membrane-spanning segment; sequence LVSALLLMLFCVALWPVQCAL. A disordered region spans residues 230–249; sequence PPRPPATSTAASPLGPLTDN. The span at 235–249 shows a compositional bias: low complexity; sequence ATSTAASPLGPLTDN.

The protein resides in the membrane. This chain is RING finger protein 223 (RNF223), found in Homo sapiens (Human).